A 223-amino-acid polypeptide reads, in one-letter code: Cutinase (223 aa).

The N-terminal stretch at 1–19 is a signal peptide; sequence MKFFAFSMLIGEASPIVLA. Residues Cys46 and Cys124 are joined by a disulfide bond. Ser135 (nucleophile) is an active-site residue. The cysteines at positions 185 and 192 are disulfide-linked. Residue Asp189 is part of the active site. His202 acts as the Proton donor/acceptor in catalysis.

The protein belongs to the cutinase family. Post-translationally, the 2 disulfide bonds play a critical role in holding the catalytic residues in juxta-position; reduction of the disulfide bridges results in the complete inactivation of the enzyme.

The protein resides in the secreted. It carries out the reaction cutin + H2O = cutin monomers.. In terms of biological role, catalyzes the hydrolysis of complex carboxylic polyesters found in the cell wall of plants. Degrades cutin, a macromolecule that forms the structure of the plant cuticle. Allows pathogenic fungi to penetrate through the cuticular barrier into the host plant during the initial stage of fungal infection. This Didymella rabiei (Chickpea ascochyta blight fungus) protein is Cutinase (CUT).